A 419-amino-acid chain; its full sequence is D-amino acid dehydrogenase (419 aa).

3-17 contacts FAD; sequence VLILGSGVVGVTSAY.

This sequence belongs to the DadA oxidoreductase family. FAD serves as cofactor.

It catalyses the reaction a D-alpha-amino acid + A + H2O = a 2-oxocarboxylate + AH2 + NH4(+). It functions in the pathway amino-acid degradation; D-alanine degradation; NH(3) and pyruvate from D-alanine: step 1/1. Functionally, oxidative deamination of D-amino acids. The polypeptide is D-amino acid dehydrogenase (Chromohalobacter salexigens (strain ATCC BAA-138 / DSM 3043 / CIP 106854 / NCIMB 13768 / 1H11)).